Consider the following 400-residue polypeptide: Plasminogen activator inhibitor 1 (400 aa).

The first 21 residues, 1–21 (MQMSTVCLALGLALVFGEASA), serve as a signal peptide directing secretion. Residues asparagine 230, asparagine 286, and asparagine 350 are each glycosylated (N-linked (GlcNAc...) asparagine).

It belongs to the serpin family. Forms a heterodimer with TMPRSS7. Interacts with VTN. Binds LRP1B; binding is followed by internalization and degradation. Interacts with PPP1CB. In complex with PLAU/uPA, interacts with PLAUR/uPAR. Interacts with SORL1 and LRP1, either alone or in complex with PLAU; these interactions are abolished in the presence of LRPAP1/RAP. The ternary complex composed of PLAUR-PLAU-PAI1 also interacts with SORL1. Interacts with PLAT/tPA. Also interacts with SORL1, when complexed to PLAT/tPA.

It is found in the secreted. In terms of biological role, serine protease inhibitor. Inhibits TMPRSS7. Is a primary inhibitor of tissue-type plasminogen activator (PLAT) and urokinase-type plasminogen activator (PLAU). As PLAT inhibitor, it is required for fibrinolysis down-regulation and is responsible for the controlled degradation of blood clots. As PLAU inhibitor, it is involved in the regulation of cell adhesion and spreading. Acts as a regulator of cell migration, independently of its role as protease inhibitor. It is required for stimulation of keratinocyte migration during cutaneous injury repair. It is involved in cellular and replicative senescence. Plays a role in alveolar type 2 cells senescence in the lung. Is involved in the regulation of cementogenic differentiation of periodontal ligament stem cells, and regulates odontoblast differentiation and dentin formation during odontogenesis. The protein is Plasminogen activator inhibitor 1 (SERPINE1) of Neovison vison (American mink).